We begin with the raw amino-acid sequence, 272 residues long: HTH-type transcriptional repressor AllR (272 aa).

The tract at residues 1 to 20 (MTEVRRRGRPGQAEPTAQKG) is disordered. An HTH iclR-type domain is found at 21–83 (AQALERGIAI…SQLGWWHIGL (63 aa)). The segment at residues 43–62 (VSDISGSLDLPLSTTFRLLK) is a DNA-binding region (H-T-H motif). In terms of domain architecture, IclR-ED spans 98–267 (VLSVAGPFMH…AKDISTALGL (170 aa)). Glyoxylate-binding positions include 154-156 (SGA), aspartate 207, cysteine 217, and 234-236 (SIS).

Its function is as follows. Negative regulator of allantoin and glyoxylate utilization operons. Binds to the gcl promoter and to the allS-allA intergenic region. This chain is HTH-type transcriptional repressor AllR (allR), found in Salmonella typhi.